The primary structure comprises 429 residues: Tryptophan synthase beta chain 2 (429 aa).

Lysine 111 is modified (N6-(pyridoxal phosphate)lysine).

Belongs to the TrpB family. Tetramer of two alpha and two beta chains. Pyridoxal 5'-phosphate serves as cofactor.

It catalyses the reaction (1S,2R)-1-C-(indol-3-yl)glycerol 3-phosphate + L-serine = D-glyceraldehyde 3-phosphate + L-tryptophan + H2O. Its pathway is amino-acid biosynthesis; L-tryptophan biosynthesis; L-tryptophan from chorismate: step 5/5. Its function is as follows. The beta subunit is responsible for the synthesis of L-tryptophan from indole and L-serine. This is Tryptophan synthase beta chain 2 (trpB2) from Saccharolobus solfataricus (strain ATCC 35092 / DSM 1617 / JCM 11322 / P2) (Sulfolobus solfataricus).